The sequence spans 372 residues: O-glycoside alpha-1,2-mannosyltransferase homolog 2 (372 aa).

Over 1 to 6 (MRISRL) the chain is Cytoplasmic. The helical; Signal-anchor for type II membrane protein transmembrane segment at 7 to 27 (LIRVLLGFVILFITYILFPSI) threads the bilayer. Residues 28–372 (PKALVNTLNV…NLTNEDYDEL (345 aa)) are Lumenal-facing. The active-site Nucleophile is Glu-271.

This sequence belongs to the glycosyltransferase 15 family.

The protein resides in the endoplasmic reticulum membrane. Functionally, probable mannosyltransferase involved in O-glycosylation of cell wall and secreted proteins. In Schizosaccharomyces pombe (strain 972 / ATCC 24843) (Fission yeast), this protein is O-glycoside alpha-1,2-mannosyltransferase homolog 2 (omh2).